The primary structure comprises 397 residues: Succinate--CoA ligase [ADP-forming] subunit beta (397 aa).

In terms of domain architecture, ATP-grasp spans 9–254 (KALLKGYGAP…ETEEDAKEIE (246 aa)). ATP is bound by residues Lys-46, 53-55 (GRG), Glu-109, Ala-112, and Glu-117. Positions 209 and 223 each coordinate Mg(2+). Substrate is bound by residues Asn-274 and 331 to 333 (GIM).

It belongs to the succinate/malate CoA ligase beta subunit family. In terms of assembly, heterotetramer of two alpha and two beta subunits. Requires Mg(2+) as cofactor.

The enzyme catalyses succinate + ATP + CoA = succinyl-CoA + ADP + phosphate. The catalysed reaction is GTP + succinate + CoA = succinyl-CoA + GDP + phosphate. Its pathway is carbohydrate metabolism; tricarboxylic acid cycle; succinate from succinyl-CoA (ligase route): step 1/1. In terms of biological role, succinyl-CoA synthetase functions in the citric acid cycle (TCA), coupling the hydrolysis of succinyl-CoA to the synthesis of either ATP or GTP and thus represents the only step of substrate-level phosphorylation in the TCA. The beta subunit provides nucleotide specificity of the enzyme and binds the substrate succinate, while the binding sites for coenzyme A and phosphate are found in the alpha subunit. The chain is Succinate--CoA ligase [ADP-forming] subunit beta from Rhizobium johnstonii (strain DSM 114642 / LMG 32736 / 3841) (Rhizobium leguminosarum bv. viciae).